The following is a 7481-amino-acid chain: Polyketide synthase GfsA (7481 aa).

Positions 24-1020 are loading module (LM); that stretch reads ASDEPIAVIG…ETAEFVRARL (997 aa). The Ketosynthase family 3 (KS3) 1 domain occupies 26–451; it reads DEPIAVIGLS…GTNCHVVVSA (426 aa). The interval 60-80 is disordered; the sequence is RVPADRETPPSTEEESADGEA. Q197 (for decarboxylation activity of LM) is an active-site residue. Residue S662 is the For acyltransferase activity of LM of the active site. Residues 945–1020 enclose the Carrier 1 domain; that stretch reads PDPVETVRQL…ETAEFVRARL (76 aa). O-(pantetheine 4'-phosphoryl)serine is present on S980. Residues 1038–1454 form the Ketosynthase family 3 (KS3) 2 domain; it reads DEPIAVVAMS…GTNAHVILEQ (417 aa). Module stretches follow at residues 1038-2517, 2538-4063, 4084-5636, and 5655-7400; these read DEPI…AGEL, EDPI…LQRI, DDPI…GSEV, and DEPV…GEQL. Residues C1201, H1336, and H1376 each act as for beta-ketoacyl synthase 1 activity in the active site. One can recognise a Carrier 2 domain in the interval 2442-2517; sequence RVLLDLVRGR…ALAEHLAGEL (76 aa). An O-(pantetheine 4'-phosphoryl)serine modification is found at S2477. The Ketosynthase family 3 (KS3) 3 domain occupies 2538–2964; the sequence is EDPIAIVAMS…GTNAHVIIEE (427 aa). Residues C2711, H2846, and H2886 each act as for beta-ketoacyl synthase 2 activity in the active site. The 76-residue stretch at 3988–4063 folds into the Carrier 3 domain; that stretch reads QALQDLVLTE…ATTEYLLQRI (76 aa). S4023 is subject to O-(pantetheine 4'-phosphoryl)serine. One can recognise a Ketosynthase family 3 (KS3) 4 domain in the interval 4084–4514; sequence DDPIAIVAMG…GTNAHVILEQ (431 aa). Active-site for beta-ketoacyl synthase 3 activity residues include C4261, H4396, and H4436. Positions 5561–5636 constitute a Carrier 4 domain; that stretch reads TALLDLIRGQ…ALAEYVGSEV (76 aa). S5596 bears the O-(pantetheine 4'-phosphoryl)serine mark. The 427-residue stretch at 5655 to 6081 folds into the Ketosynthase family 3 (KS3) 5 domain; it reads DEPVAIIGMS…GTNAHVILEQ (427 aa). Catalysis depends on for beta-ketoacyl synthase 4 activity residues C5828, H5963, and H6003. An N-terminal hotdog fold region spans residues 6561 to 6685; that stretch reads HPLLGAAVAL…GVLASGAATV (125 aa). One can recognise a PKS/mFAS DH domain in the interval 6561-6841; it reads HPLLGAAVAL…LRPVSADTIA (281 aa). The active-site Proton acceptor; for dehydratase activity is H6593. The segment at 6700 to 6841 is C-terminal hotdog fold; that stretch reads ATAVDIDGLY…LRPVSADTIA (142 aa). The Proton donor; for dehydratase activity role is filled by D6761. Residues 7325 to 7400 form the Carrier 5 domain; sequence QELLDFVCEH…LLAGHIGEQL (76 aa). S7360 is subject to O-(pantetheine 4'-phosphoryl)serine.

As to quaternary structure, homodimer. The loading module (LM, residues 13-926) dimerizes. LM cross-links to its cognate acyl-carrier domain in a manner that seems physiological; mutation of residues in the 2 domains alters reactions efficiency in a manner predicted by the cross-linked crystal. Pantetheine 4'-phosphate is required as a cofactor.

It participates in antibiotic biosynthesis. In terms of biological role, first protein in the synthesis of the 16-membered macrolide antibiotics FD-891 and FD-892. Composed of 5 modules; the first is a loading module (LM) that synthesizes a starter unit used by the first elongation module for polyketide chain elongation. The starter unit is extended by multiple rounds of addition of malonyl-CoA or methylmalonyl-CoA, and other modifications to help generate the final products. The loading module (residues 1-927, LM with an inactive acyltransferase domain) preferentially decarboxylates malonyl-GfsA acyl carrier protein of the LM (ACP-LM) over methylmalonyl-GfsA ACP-LM and has no activity on malonyl-CoA or methymalonyl-CoA. LM decarboxylates malonyl-ACP-LM better than the malonyl-ACP-1 module of GfsA (i.e. the next module in the same protein) and has no activity on other malonyl-ACP modules. The protein is Polyketide synthase GfsA of Streptomyces halstedii.